The sequence spans 41 residues: Entericidin A (41 aa).

A signal peptide spans 1 to 18 (MMKRLIVLVLLASTLLTG). Cysteine 19 is lipidated: N-palmitoyl cysteine. Cysteine 19 is lipidated: S-diacylglycerol cysteine.

Belongs to the EcnA/EcnB lipoprotein family.

The protein resides in the cell membrane. Acts as antidote to the effect of entericidin B. The polypeptide is Entericidin A (ecnA) (Escherichia coli O157:H7).